The following is a 573-amino-acid chain: MTNSKGRSITDKTSGGPSSGGGFVDWTLRLNTIQSDKFLNLLLSMVPVIYQKNQEDRHKKANGIWQDGLSTAVQTFSNRSEQHMEYHSFSEQSFHANNGHASSSCSQKYDDYANYNYCDGRETSETTAMLQDEDISSDGDEDAIVEVTPKLPKESSGIMALQILVPFLLAGFGTVSAGMVLDIVQHWEVFRKVTEVFILVPALLGLKGNLEMTLASRLSTAVNIGKMDSPIEKWNLIIGNLALKQVQATVVGFLAAVAAIILGWIPEGKYYLDHSILLCSSSVATAFIASLLQGIIMVGVIVGSKKTGINPDNVATPIAASFGDLITLAILAWISQGLYSCLETYYYISPLVGVFFLALTPIWIIIAAKHPATRTVLHSGWEPVITAMVISSIGGLILDTTVSDPNLVGIVVYTPVINGIGGNLVAIQASRISTYLHLHSIPGELPDEPKGCYYPFRTFFGPGVNNKSAQVLLLLVIPGHLIFLYTIHLMKSGHTSLTIIFIVVYLFGAVLQVFTLLWIADWMVHHFWRKGKDPDSFSIPYLTALGDLLGTALLALSFHFLWLIGDRDGDVGD.

Residues 1 to 162 (MTNSKGRSIT…KESSGIMALQ (162 aa)) lie on the Extracellular side of the membrane. 2 positions are modified to phosphoserine: S136 and S137. The chain crosses the membrane as a helical span at residues 163–183 (ILVPFLLAGFGTVSAGMVLDI). Residues 184–195 (VQHWEVFRKVTE) lie on the Cytoplasmic side of the membrane. The chain crosses the membrane as a helical span at residues 196–216 (VFILVPALLGLKGNLEMTLAS). The Extracellular portion of the chain corresponds to 217–245 (RLSTAVNIGKMDSPIEKWNLIIGNLALKQ). Residues 246–266 (VQATVVGFLAAVAAIILGWIP) form a helical membrane-spanning segment. Residues 267–282 (EGKYYLDHSILLCSSS) lie on the Cytoplasmic side of the membrane. Residues 283 to 303 (VATAFIASLLQGIIMVGVIVG) form a helical membrane-spanning segment. At 304–313 (SKKTGINPDN) the chain is on the extracellular side. Residues 314–334 (VATPIAASFGDLITLAILAWI) form a helical membrane-spanning segment. Topologically, residues 335–347 (SQGLYSCLETYYY) are cytoplasmic. The chain crosses the membrane as a helical span at residues 348–368 (ISPLVGVFFLALTPIWIIIAA). Residues 369–376 (KHPATRTV) lie on the Extracellular side of the membrane. A helical transmembrane segment spans residues 377–397 (LHSGWEPVITAMVISSIGGLI). At 398–406 (LDTTVSDPN) the chain is on the cytoplasmic side. Residues 407–427 (LVGIVVYTPVINGIGGNLVAI) form a helical membrane-spanning segment. At 428–469 (QASRISTYLHLHSIPGELPDEPKGCYYPFRTFFGPGVNNKSA) the chain is on the extracellular side. Residues 470 to 490 (QVLLLLVIPGHLIFLYTIHLM) traverse the membrane as a helical segment. Topologically, residues 491 to 498 (KSGHTSLT) are cytoplasmic. A helical transmembrane segment spans residues 499 to 519 (IIFIVVYLFGAVLQVFTLLWI). Residues 520 to 543 (ADWMVHHFWRKGKDPDSFSIPYLT) lie on the Extracellular side of the membrane. The chain crosses the membrane as a helical span at residues 544 to 564 (ALGDLLGTALLALSFHFLWLI). At 565–573 (GDRDGDVGD) the chain is on the cytoplasmic side.

Belongs to the SLC41A transporter family.

The protein localises to the cell membrane. The enzyme catalyses Mg(2+)(in) = Mg(2+)(out). The catalysed reaction is Mn(2+)(in) = Mn(2+)(out). It carries out the reaction Co(2+)(in) = Co(2+)(out). It catalyses the reaction Ni(2+)(in) = Ni(2+)(out). The enzyme catalyses Fe(2+)(in) = Fe(2+)(out). Acts as a plasma-membrane magnesium transporter. Can also mediate the transport of other divalent metal cations in an order of Ba(2+) &gt; Ni(2+) &gt; Co(2+) &gt; Fe(2+) &gt; Mn(2+). This Homo sapiens (Human) protein is Solute carrier family 41 member 2 (SLC41A2).